Consider the following 60-residue polypeptide: Large ribosomal subunit protein uL30 (60 aa).

This sequence belongs to the universal ribosomal protein uL30 family. Part of the 50S ribosomal subunit.

This Verminephrobacter eiseniae (strain EF01-2) protein is Large ribosomal subunit protein uL30.